Reading from the N-terminus, the 126-residue chain is Fluoride-specific ion channel FluC (126 aa).

4 consecutive transmembrane segments (helical) span residues 6–26, 36–56, 68–88, and 99–119; these read FVAV…FAVL, YGTL…VGFF, LLAV…SSEV, and IGML…MLGL. 2 residues coordinate Na(+): Gly76 and Thr79.

Belongs to the fluoride channel Fluc/FEX (TC 1.A.43) family.

It is found in the cell inner membrane. The catalysed reaction is fluoride(in) = fluoride(out). With respect to regulation, na(+) is not transported, but it plays an essential structural role and its presence is essential for fluoride channel function. Functionally, fluoride-specific ion channel. Important for reducing fluoride concentration in the cell, thus reducing its toxicity. This chain is Fluoride-specific ion channel FluC, found in Ralstonia nicotianae (strain ATCC BAA-1114 / GMI1000) (Ralstonia solanacearum).